Here is a 161-residue protein sequence, read N- to C-terminus: Large ribosomal subunit protein uL15 (161 aa).

The disordered stretch occupies residues 1 to 44 (MKLSEIADNAGSRKKRMRVGRGIGSGKGKTAGRGGKGQTARSGV). Residues 21-37 (RGIGSGKGKTAGRGGKG) show a composition bias toward gly residues.

The protein belongs to the universal ribosomal protein uL15 family. As to quaternary structure, part of the 50S ribosomal subunit.

Binds to the 23S rRNA. In Rhodopseudomonas palustris (strain BisA53), this protein is Large ribosomal subunit protein uL15.